The chain runs to 392 residues: DNA-directed RNA polymerase subunit Rpo1C (392 aa).

It belongs to the RNA polymerase beta' chain family. Part of the RNA polymerase complex.

It is found in the cytoplasm. The catalysed reaction is RNA(n) + a ribonucleoside 5'-triphosphate = RNA(n+1) + diphosphate. Its function is as follows. DNA-dependent RNA polymerase (RNAP) catalyzes the transcription of DNA into RNA using the four ribonucleoside triphosphates as substrates. Forms part of the jaw domain. The protein is DNA-directed RNA polymerase subunit Rpo1C of Metallosphaera sedula (strain ATCC 51363 / DSM 5348 / JCM 9185 / NBRC 15509 / TH2).